The following is a 1077-amino-acid chain: Semaphorin-5A (1077 aa).

The signal sequence occupies residues 1-21 (MKGACILAWLFSSLGVWRLAR). Topologically, residues 22–971 (PETQDPAKCQ…RCGEFNMFHM (950 aa)) are extracellular. Positions 35 to 484 (HPVVSYKEIG…LQEHVAKIPL (450 aa)) constitute a Sema domain. 2 disulfide bridges follow: Cys-104–Cys-114 and Cys-131–Cys-140. 4 N-linked (GlcNAc...) asparagine glycosylation sites follow: Asn-147, Asn-168, Asn-227, and Asn-277. 2 cysteine pairs are disulfide-bonded: Cys-254–Cys-357 and Cys-278–Cys-320. Residues Asn-323 and Asn-367 are each glycosylated (N-linked (GlcNAc...) asparagine). 2 cysteine pairs are disulfide-bonded: Cys-487–Cys-504 and Cys-496–Cys-513. Asn-536 and Asn-591 each carry an N-linked (GlcNAc...) asparagine glycan. TSP type-1 domains follow at residues 540-593 (DGSF…TNCS), 595-651 (NGGW…LLCP), 653-702 (HVFW…NACP), 707-765 (TTPW…GCST), 784-839 (NGAW…LPCP), 841-896 (DGVW…QTCP), and 897-944 (ESWS…VFDS). Disulfide bonds link Cys-607/Cys-644, Cys-611/Cys-650, Cys-622/Cys-634, Cys-665/Cys-696, Cys-669/Cys-701, and Cys-680/Cys-686. Residue Asn-717 is glycosylated (N-linked (GlcNAc...) asparagine). 6 cysteine pairs are disulfide-bonded: Cys-796–Cys-833, Cys-800–Cys-838, Cys-811–Cys-823, Cys-853–Cys-890, Cys-857–Cys-895, and Cys-868–Cys-880. N-linked (GlcNAc...) asparagine glycosylation occurs at Asn-933. The helical transmembrane segment at 972 to 992 (FHMMAVGLSSSILGCLLTLLV) threads the bilayer. At 993–1077 (YTYCQRYQQQ…FTDLNNYDEY (85 aa)) the chain is on the cytoplasmic side.

This sequence belongs to the semaphorin family. As to quaternary structure, binds PLXNB3. As to expression, in adult, detected in liver, brain, kidney, heart, lung and spleen.

The protein resides in the membrane. Bifunctional axonal guidance cue regulated by sulfated proteoglycans; attractive effects result from interactions with heparan sulfate proteoglycans (HSPGs), while the inhibitory effects depend on interactions with chondroitin sulfate proteoglycans (CSPGs). Ligand for receptor PLXNB3. In glioma cells, SEMA5A stimulation of PLXNB3 results in the disassembly of F-actin stress fibers, disruption of focal adhesions and cellular collapse as well as inhibition of cell migration and invasion through ARHGDIA-mediated inactivation of RAC1. May promote angiogenesis by increasing endothelial cell proliferation and migration and inhibiting apoptosis. The sequence is that of Semaphorin-5A (Sema5a) from Mus musculus (Mouse).